Reading from the N-terminus, the 264-residue chain is Glutamate racemase (264 aa).

Substrate-binding positions include 10–11 (DS) and 42–43 (YG). Residue Cys-73 is the Proton donor/acceptor of the active site. Residue 74–75 (NT) coordinates substrate. The active-site Proton donor/acceptor is Cys-183. 184–185 (TH) serves as a coordination point for substrate.

Belongs to the aspartate/glutamate racemases family.

The catalysed reaction is L-glutamate = D-glutamate. Its pathway is cell wall biogenesis; peptidoglycan biosynthesis. Provides the (R)-glutamate required for cell wall biosynthesis. This chain is Glutamate racemase, found in Streptococcus pyogenes serotype M49 (strain NZ131).